The sequence spans 232 residues: Small ribosomal subunit protein uS3 (232 aa).

The 69-residue stretch at 39 to 107 (IRKFLKTKLY…DIAINIKEER (69 aa)) folds into the KH type-2 domain. Basic and acidic residues predominate over residues 213 to 222 (QADKNEDTSP). The tract at residues 213–232 (QADKNEDTSPKKPRRARRGK) is disordered. Residues 223–232 (KKPRRARRGK) are compositionally biased toward basic residues.

This sequence belongs to the universal ribosomal protein uS3 family. In terms of assembly, part of the 30S ribosomal subunit. Forms a tight complex with proteins S10 and S14.

Binds the lower part of the 30S subunit head. Binds mRNA in the 70S ribosome, positioning it for translation. The chain is Small ribosomal subunit protein uS3 from Campylobacter fetus subsp. fetus (strain 82-40).